Consider the following 470-residue polypeptide: Putative ankyrin repeat protein L279 (470 aa).

ANK repeat units follow at residues 119–148 (RDDYMLEWACAGNFTEVARYLLKIGANPGT), 149–178 (NKYACFESAVRNGNYDMVKLLLENIPGSDK), 372–401 (ETQGLLTNACQYNNSELVKYLLEKGANVNE), and 403–431 (NGKPLREAIKNNNKDIIKNLMDYSPDISL).

This is Putative ankyrin repeat protein L279 from Acanthamoeba polyphaga (Amoeba).